A 145-amino-acid polypeptide reads, in one-letter code: Hemoglobin subunit beta (145 aa).

In terms of domain architecture, Globin spans 1–145; that stretch reads MLTAEEKAAV…VANALAHRYH (145 aa). A Phosphothreonine modification is found at Thr11. Ser43 carries the post-translational modification Phosphoserine. Lys58 carries the post-translational modification N6-acetyllysine. Residue His62 coordinates heme b. The residue at position 81 (Lys81) is an N6-acetyllysine. Heme b is bound at residue His91. Cys92 bears the S-nitrosocysteine mark.

Belongs to the globin family. As to quaternary structure, heterotetramer of two alpha chains and two beta chains. As to expression, red blood cells.

Functionally, involved in oxygen transport from the lung to the various peripheral tissues. In Tragelaphus strepsiceros (Greater kudu), this protein is Hemoglobin subunit beta (HBB).